Reading from the N-terminus, the 137-residue chain is Methylglyoxal synthase (137 aa).

The region spanning methionine 1–alanine 137 is the MGS-like domain. Substrate-binding positions include histidine 8, lysine 12, threonine 34 to threonine 37, and serine 54 to glycine 55. Aspartate 60 serves as the catalytic Proton donor/acceptor. Residue histidine 87 coordinates substrate.

Belongs to the methylglyoxal synthase family.

It carries out the reaction dihydroxyacetone phosphate = methylglyoxal + phosphate. Catalyzes the formation of methylglyoxal from dihydroxyacetone phosphate. In Exiguobacterium sp. (strain ATCC BAA-1283 / AT1b), this protein is Methylglyoxal synthase.